The following is a 173-amino-acid chain: Gamma-crystallin S-1 (173 aa).

Beta/gamma crystallin 'Greek key' domains follow at residues 2–40 and 41–83; these read GKII…RVES and DWWV…RMLP. The connecting peptide stretch occupies residues 84–88; that stretch reads HTGRS. Beta/gamma crystallin 'Greek key' domains follow at residues 89–129 and 130–172; these read YRMR…QVMD and GYWI…RRIM.

This sequence belongs to the beta/gamma-crystallin family.

Crystallins are the dominant structural components of the vertebrate eye lens. The protein is Gamma-crystallin S-1 (GS-1) of Chiloscyllium indicum (Slender bamboo shark).